We begin with the raw amino-acid sequence, 150 residues long: Cytochrome b5 type B (150 aa).

The propeptide occupies 1 to 15 (MSGSMATAEASGSDG). The disordered stretch occupies residues 1–20 (MSGSMATAEASGSDGKGQEV). A Phosphoserine modification is found at serine 23. Positions 24 to 100 (VTYYRLEEVA…LKQYYIGDIH (77 aa)) constitute a Cytochrome b5 heme-binding domain. The residue at position 34 (lysine 34) is an N6-acetyllysine. The residue at position 37 (serine 37) is a Phosphoserine. Residue lysine 39 is modified to N6-methyllysine. Heme-binding residues include histidine 59 and histidine 83. Serine 84 bears the Phosphoserine mark. The helical transmembrane segment at 123-140 (WAYWILPIIGAVLLGFLY) threads the bilayer.

This sequence belongs to the cytochrome b5 family. Component of a complex composed of cytochrome b5, NADH-cytochrome b5 reductase (CYB5R3) and MTARC2.

It is found in the mitochondrion outer membrane. Functionally, cytochrome b5 is a membrane-bound hemoprotein functioning as an electron carrier for several membrane-bound oxygenases. This chain is Cytochrome b5 type B (CYB5B), found in Homo sapiens (Human).